A 124-amino-acid polypeptide reads, in one-letter code: Tax1-binding protein 3 (124 aa).

N-acetylserine is present on S2. The 98-residue stretch at 15–112 (RVEIHKLRQG…EVVRLLVTRQ (98 aa)) folds into the PDZ domain. Residue S61 is modified to Phosphoserine.

In terms of assembly, interacts (via its PDZ domain) with GLS2. Interacts (via its PDZ domain) with RTKN (via the C-terminal region); this interaction facilitates Rho-mediated activation of the FOS serum response element (SRE). Interacts (via its PDZ domain) with CTNNB1; this interaction inhibits the transcriptional activity of CTNNB1. Interacts with HTLV-1 TAX protein. Interacts (via PDZ domain) with ARHGEF16. Interacts (via PDZ domain) with KCNJ4 (via C-terminus). Competes with LIN7A for KCNJ4 binding. Interacts with ADGRB2. As to expression, ubiquitous. Detected in brain, heart, kidney, lung, small intestine and skeletal muscle. Detected in various cell lines including HeLa. Weakly expressed in peripheral blood leukocytes.

It is found in the cytoplasm. The protein localises to the nucleus. Its subcellular location is the cell membrane. Functionally, may regulate a number of protein-protein interactions by competing for PDZ domain binding sites. Binds CTNNB1 and may thereby act as an inhibitor of the Wnt signaling pathway. Competes with LIN7A for KCNJ4 binding, and thereby promotes KCNJ4 internalization. May play a role in the Rho signaling pathway. May play a role in activation of CDC42 by the viral protein HPV16 E6. The polypeptide is Tax1-binding protein 3 (Homo sapiens (Human)).